A 323-amino-acid polypeptide reads, in one-letter code: MDWQNRFSVLNLSSHDPLPELMLTHLTGWGAITLVGADKKAYLQGQVTCNVVSLQEQQVTFGAHCDAKGKVWSVFRLFHHHDGYAMFQPQSAMEVELRELKKYAIFSKVTIAESSDIALGVMGSQADAWIDTVSETTGDVRRIAGGTAVRMSPQRWLLLVNAEQAEQYVNAWQGLHVEQSLWTRMDIEEAVPVVTQTAQNEHIPQALNVQAVDGISFTKGCYTGQETVARAKYRGINKRAMYIVKGNLSAPLSQDEPVVLERAVGENWRSAGALLTHYRFTDSIAIGLIVLPNDLEHDVKLRLAAQPDTRWHIQPLPYSLSDE.

Residues tryptophan 29 and tryptophan 182 each contribute to the folate site.

It belongs to the tRNA-modifying YgfZ family.

The protein resides in the cytoplasm. Folate-binding protein involved in regulating the level of ATP-DnaA and in the modification of some tRNAs. It is probably a key factor in regulatory networks that act via tRNA modification, such as initiation of chromosomal replication. This is tRNA-modifying protein YgfZ from Vibrio cholerae serotype O1 (strain M66-2).